Reading from the N-terminus, the 194-residue chain is MAQKTETAIPSNSKARFETLYREKVTKALSERFGYKNVMNIPRLQKISINIGVGEAASEPKLLETAIQELAQITGQKPQIRKSKKAISNFKLREGQAIGCRVTLRRKAMYEFFDRFVSLAVPRIRDFRGLSDTSFDGRGNYTIGVREQIIFPEIDIDKIPKICGMDISFVTSAKTDEEAYVLLAELGMPFKKKN.

The protein belongs to the universal ribosomal protein uL5 family. As to quaternary structure, part of the 50S ribosomal subunit; part of the 5S rRNA/L5/L18/L25 subcomplex. Contacts the 5S rRNA and the P site tRNA. Forms a bridge to the 30S subunit in the 70S ribosome.

In terms of biological role, this is one of the proteins that bind and probably mediate the attachment of the 5S RNA into the large ribosomal subunit, where it forms part of the central protuberance. In the 70S ribosome it contacts protein S13 of the 30S subunit (bridge B1b), connecting the 2 subunits; this bridge is implicated in subunit movement. Contacts the P site tRNA; the 5S rRNA and some of its associated proteins might help stabilize positioning of ribosome-bound tRNAs. The chain is Large ribosomal subunit protein uL5 from Chlorobium luteolum (strain DSM 273 / BCRC 81028 / 2530) (Pelodictyon luteolum).